The following is a 429-amino-acid chain: MAAIVIVGAQWGDEGKGKATDILGGQVDYVVKPNGGNNAGHTVVVGGEKYELKLLPAGVLSENATPILGNGVVINLEALFEEMDGLIARGCDASRLRISSNAHLVAPYHQILDRVQERFLGKRAIGTTGRGIGPTYADKVSRVGIRVQDVFDESILRQKIESALNVKNQTLVKMYNRKAIVAEEMVQYFLGYVERLRPMVIEAELELNRGLDAGKHVLMEGGQATMLDVDHGTYPFVTSSNPTAGGACVGSGIGPTRITSSLGIIKAYTTRVGAGPFPTELFDKWGEFLQTTGGEVGVNTGRKRRCGWYDSVVARYASRVNGFTDLFLTKLDVLTGIGEIPICVAYDVDGVRHDEMPMTQSDFHHATPIYETMPAWDEDITGCKTFDDLPEKAQAYVRRLEELSGCRISYIGVGPGRDQTIVCHDVMEA.

GTP contacts are provided by residues 12–18 and 40–42; these read GDEGKGK and GHT. Asp-13 (proton acceptor) is an active-site residue. Positions 13 and 40 each coordinate Mg(2+). Residues 13–16, 38–41, Thr-128, Arg-142, Gln-223, Thr-238, and Arg-302 each bind IMP; these read DEGK and NAGH. His-41 serves as the catalytic Proton donor. 298 to 304 lines the substrate pocket; sequence VNTGRKR. GTP is bound by residues Arg-304, 330–332, and 412–414; these read KLD and GVG.

It belongs to the adenylosuccinate synthetase family. In terms of assembly, homodimer. Mg(2+) is required as a cofactor.

The protein localises to the cytoplasm. It catalyses the reaction IMP + L-aspartate + GTP = N(6)-(1,2-dicarboxyethyl)-AMP + GDP + phosphate + 2 H(+). Its pathway is purine metabolism; AMP biosynthesis via de novo pathway; AMP from IMP: step 1/2. Functionally, plays an important role in the de novo pathway of purine nucleotide biosynthesis. Catalyzes the first committed step in the biosynthesis of AMP from IMP. This is Adenylosuccinate synthetase from Corynebacterium diphtheriae (strain ATCC 700971 / NCTC 13129 / Biotype gravis).